We begin with the raw amino-acid sequence, 502 residues long: Serine carboxypeptidase-like 40 (502 aa).

Residues 1-24 (MRKGQGYSYSVIASVLVLLCVVVS) form the signal peptide. 2 N-linked (GlcNAc...) asparagine glycosylation sites follow: N103 and N187. Cystine bridges form between C136-C384, C293-C307, and C331-C352. S229 is a catalytic residue. N-linked (GlcNAc...) asparagine glycosylation is found at N333 and N373. Residue D420 is part of the active site. Residue N436 is glycosylated (N-linked (GlcNAc...) asparagine). Residue H473 is part of the active site.

Belongs to the peptidase S10 family. Expressed in roots, leaves, flowers and siliques.

The protein localises to the secreted. In terms of biological role, probable carboxypeptidase. The sequence is that of Serine carboxypeptidase-like 40 (SCPL40) from Arabidopsis thaliana (Mouse-ear cress).